We begin with the raw amino-acid sequence, 473 residues long: UDP-N-acetylmuramate--L-alanine ligase (473 aa).

ATP is bound at residue 112 to 118 (GTHGKTT).

This sequence belongs to the MurCDEF family.

It is found in the cytoplasm. The catalysed reaction is UDP-N-acetyl-alpha-D-muramate + L-alanine + ATP = UDP-N-acetyl-alpha-D-muramoyl-L-alanine + ADP + phosphate + H(+). Its pathway is cell wall biogenesis; peptidoglycan biosynthesis. In terms of biological role, cell wall formation. The polypeptide is UDP-N-acetylmuramate--L-alanine ligase (Nitrosomonas eutropha (strain DSM 101675 / C91 / Nm57)).